A 216-amino-acid chain; its full sequence is Probable nicotinate-nucleotide adenylyltransferase (216 aa).

It belongs to the NadD family.

It carries out the reaction nicotinate beta-D-ribonucleotide + ATP + H(+) = deamido-NAD(+) + diphosphate. Its pathway is cofactor biosynthesis; NAD(+) biosynthesis; deamido-NAD(+) from nicotinate D-ribonucleotide: step 1/1. Functionally, catalyzes the reversible adenylation of nicotinate mononucleotide (NaMN) to nicotinic acid adenine dinucleotide (NaAD). The protein is Probable nicotinate-nucleotide adenylyltransferase of Pelobacter propionicus (strain DSM 2379 / NBRC 103807 / OttBd1).